Reading from the N-terminus, the 206-residue chain is Large ribosomal subunit protein uL4 (206 aa).

The segment covering 66-77 (QKGTGRARHHSA) has biased composition (basic residues). Residues 66-96 (QKGTGRARHHSARAPQFRGGGQAHGPVVRSH) form a disordered region.

Belongs to the universal ribosomal protein uL4 family. As to quaternary structure, part of the 50S ribosomal subunit.

One of the primary rRNA binding proteins, this protein initially binds near the 5'-end of the 23S rRNA. It is important during the early stages of 50S assembly. It makes multiple contacts with different domains of the 23S rRNA in the assembled 50S subunit and ribosome. Its function is as follows. Forms part of the polypeptide exit tunnel. This is Large ribosomal subunit protein uL4 from Brucella anthropi (strain ATCC 49188 / DSM 6882 / CCUG 24695 / JCM 21032 / LMG 3331 / NBRC 15819 / NCTC 12168 / Alc 37) (Ochrobactrum anthropi).